A 275-amino-acid chain; its full sequence is F-box only protein 50 (275 aa).

The disordered stretch occupies residues 1 to 67; sequence MEEVREGHAL…LPEPAQPSEA (67 aa). The segment covering 26-62 has biased composition (pro residues); that stretch reads PPSPRSPSPPPSPPPLPSPPSLPSPAAPEAPELPEPA. Phosphoserine occurs at positions 31, 37, and 49. The 179-residue stretch at 95–273 folds into the FBA domain; sequence LLLRRPLYRN…VTDSSVSVQL (179 aa).

Expressed in the esophagus, oral cavity, skin, tongue and reproductive organs.

It localises to the cytoplasm. In terms of biological role, promotes cell proliferation. The polypeptide is F-box only protein 50 (NCCRP1) (Homo sapiens (Human)).